We begin with the raw amino-acid sequence, 1130 residues long: Sodium/potassium/calcium exchanger 1 (1130 aa).

Over 1-419 the chain is Extracellular; the sequence is MGKLIRMGTQ…DLFSVEDRRQ (419 aa). Positions 104-209 are disordered; that stretch reads PSIAMEDTPN…SPTATVRDRE (106 aa). The span at 125–136 shows a compositional bias: polar residues; the sequence is LKNSYSPTTAGT. The span at 170–187 shows a compositional bias: basic and acidic residues; sequence PRGERKNSSPTHAREKGR. N-linked (GlcNAc...) asparagine glycosylation is found at Asn176 and Asn273. Residues 274 to 295 form a disordered region; it reads ISTTPQGAVPQHTPATSEEQMT. Positions 286–295 are enriched in polar residues; sequence TPATSEEQMT. Residues 420-440 form a helical membrane-spanning segment; that stretch reads GWVVLHIFGMMYVFVALAIVC. Residues 441-464 lie on the Cytoplasmic side of the membrane; that stretch reads DEYFVPALGVITHKLQISEDVAGA. One copy of the Alpha-1 repeat lies at 461 to 501; it reads VAGATFMAAGGSAPELFTSLIGVFISHSNVGIGTIVGSAVF. The helical transmembrane segment at 465 to 485 threads the bilayer; the sequence is TFMAAGGSAPELFTSLIGVFI. Topologically, residues 486–489 are extracellular; it reads SHSN. The helical transmembrane segment at 490–510 threads the bilayer; that stretch reads VGIGTIVGSAVFNILFVIGTC. Topologically, residues 511–530 are cytoplasmic; that stretch reads ALFSREILNLTWWPLFRDVS. A helical membrane pass occupies residues 531 to 551; that stretch reads FYILDLSMLIVFFLDSFIAWW. Position 552 (Glu552) is a topological domain, extracellular. The chain crosses the membrane as a helical span at residues 553-573; sequence SLLLLLAYALYVFTMKWNKQI. At 574–938 the chain is on the cytoplasmic side; the sequence is ELWVKEQLSR…SLEWPDSRQK (365 aa). The interval 598 to 619 is disordered; that stretch reads PSEDAVEENEQQDSKKLKLPSV. Phosphoserine is present on Ser625. The disordered stretch occupies residues 650–932; sequence GEARPSKDKQ…ENEEPLSLEW (283 aa). A compositionally biased stretch (polar residues) spans 661–675; it reads SLNQEARVLSQTKAE. Thr690 carries the post-translational modification Phosphothreonine. A compositionally biased stretch (acidic residues) spans 703–715; that stretch reads QEDDPGCQEDVDE. Over residues 730–751 the composition is skewed to basic and acidic residues; it reads ETETEGKKDEQEGETEAERKED. 2 stretches are compositionally biased toward acidic residues: residues 766–782 and 802–820; these read GETEAEGKEDEQEGETE and QEGETEAEGKEDEQEGETE. The segment covering 833-855 has biased composition (basic and acidic residues); sequence AESKEVEQERETEAEGKDKHEGQ. Composition is skewed to acidic residues over residues 870-880 and 896-928; these read GETEANAEDQC and DGGDSEEEEDEEDEEEEEEEDEEEEEEENEEPL. A helical transmembrane segment spans residues 939–959; it reads QAIYLFLLPIVFPLWLTIPDV. The Extracellular segment spans residues 960–966; sequence RRQESRK. Residues 967-987 traverse the membrane as a helical segment; the sequence is FFVITFLGSIIWIAMFSYLMV. Residues 988-1002 lie on the Cytoplasmic side of the membrane; it reads WWAHQVGETIGISEE. Residues 1003–1023 form a helical membrane-spanning segment; that stretch reads IMGLTILAAGTSIPDLITSVI. An Alpha-2 repeat occupies 1010–1041; sequence AAGTSIPDLITSVIVARKGLGDMAVSSSVGSN. At 1024–1041 the chain is on the extracellular side; the sequence is VARKGLGDMAVSSSVGSN. Residues 1042–1062 form a helical membrane-spanning segment; that stretch reads IFDITVGLPVPWLLFSLINAL. Residues 1063-1070 lie on the Cytoplasmic side of the membrane; it reads QPVPVSSN. Residues 1071–1091 form a helical membrane-spanning segment; it reads GLFCAIVLLFLMLLFVIFSIA. Residues 1092 to 1099 lie on the Extracellular side of the membrane; that stretch reads SCKWRMNK. The chain crosses the membrane as a helical span at residues 1100–1120; it reads ILGFTMFLLYFVFLVISVMLE. Topologically, residues 1121-1130 are cytoplasmic; the sequence is DRIISCPVSV.

The protein belongs to the Ca(2+):cation antiporter (CaCA) (TC 2.A.19) family. SLC24A subfamily. The uncleaved signal sequence is required for efficient membrane targeting and proper membrane integration and topology.

It localises to the cell membrane. The catalysed reaction is Ca(2+)(out) + K(+)(out) + 4 Na(+)(in) = Ca(2+)(in) + K(+)(in) + 4 Na(+)(out). Functionally, calcium, potassium:sodium antiporter that transports 1 Ca(2+) and 1 K(+) in exchange for 4 Na(+). Critical component of the visual transduction cascade, controlling the calcium concentration of outer segments during light and darkness. Light causes a rapid lowering of cytosolic free calcium in the outer segment of both retinal rod and cone photoreceptors and the light-induced lowering of calcium is caused by extrusion via this protein which plays a key role in the process of light adaptation. The sequence is that of Sodium/potassium/calcium exchanger 1 from Mus musculus (Mouse).